We begin with the raw amino-acid sequence, 514 residues long: Threonine synthase (514 aa).

An N6-(pyridoxal phosphate)lysine modification is found at K124. Pyridoxal 5'-phosphate-binding residues include G277, N278, F279, D281, and T449. A Phosphoserine modification is found at S467.

Belongs to the threonine synthase family. Pyridoxal 5'-phosphate is required as a cofactor.

The enzyme catalyses O-phospho-L-homoserine + H2O = L-threonine + phosphate. It participates in amino-acid biosynthesis; L-threonine biosynthesis; L-threonine from L-aspartate: step 5/5. Functionally, catalyzes the gamma-elimination of phosphate from L-phosphohomoserine and the beta-addition of water to produce L-threonine. The protein is Threonine synthase (THR4) of Saccharomyces cerevisiae (strain ATCC 204508 / S288c) (Baker's yeast).